The sequence spans 558 residues: FRIGIDA-like protein 3 (558 aa).

Residues Ser9 to Asp102 adopt a coiled-coil conformation. Over residues Ala454 to Glu463 the composition is skewed to basic and acidic residues. The disordered stretch occupies residues Ala454–Gly494.

Belongs to the Frigida family.

This Arabidopsis thaliana (Mouse-ear cress) protein is FRIGIDA-like protein 3 (FRL3).